The primary structure comprises 360 residues: DNA replication and repair protein RecF (360 aa).

ATP is bound at residue G30–T37.

This sequence belongs to the RecF family.

Its subcellular location is the cytoplasm. The RecF protein is involved in DNA metabolism; it is required for DNA replication and normal SOS inducibility. RecF binds preferentially to single-stranded, linear DNA. It also seems to bind ATP. In Actinobacillus pleuropneumoniae serotype 5b (strain L20), this protein is DNA replication and repair protein RecF.